Here is a 255-residue protein sequence, read N- to C-terminus: Hydroxyacylglutathione hydrolase (255 aa).

Residues His-56, His-58, Asp-60, His-61, His-114, Asp-133, and His-171 each contribute to the Zn(2+) site.

Belongs to the metallo-beta-lactamase superfamily. Glyoxalase II family. Monomer. Zn(2+) serves as cofactor.

It catalyses the reaction an S-(2-hydroxyacyl)glutathione + H2O = a 2-hydroxy carboxylate + glutathione + H(+). Its pathway is secondary metabolite metabolism; methylglyoxal degradation; (R)-lactate from methylglyoxal: step 2/2. Its function is as follows. Thiolesterase that catalyzes the hydrolysis of S-D-lactoyl-glutathione to form glutathione and D-lactic acid. This chain is Hydroxyacylglutathione hydrolase, found in Chelativorans sp. (strain BNC1).